The chain runs to 204 residues: Large ribosomal subunit protein bL25 (204 aa).

Belongs to the bacterial ribosomal protein bL25 family. CTC subfamily. Part of the 50S ribosomal subunit; part of the 5S rRNA/L5/L18/L25 subcomplex. Contacts the 5S rRNA. Binds to the 5S rRNA independently of L5 and L18.

Functionally, this is one of the proteins that binds to the 5S RNA in the ribosome where it forms part of the central protuberance. This chain is Large ribosomal subunit protein bL25, found in Rhizobium etli (strain ATCC 51251 / DSM 11541 / JCM 21823 / NBRC 15573 / CFN 42).